The primary structure comprises 363 residues: MSATFNFCAGPAMLPKPVMDKAQSELLDWNSMGTSVMEISHRSKEFIALTNQAEADLRQLMDIPANYHVLFMHGGGRGQFSAIANNFLGDKGRALYLVDGSWSSAAVEEAKKLVGEENIDTINIVENNNGINSVVLPSLSNIDKDYRYLHYCPNETVDGIEIFDTINSPWPVIADMSSNILSRKIDVNQFALIYAGAQKNIGPSGLSIVIVRNDMLSLPSLPQSSIMDYKLAVKHGSMYNTPPTFAWYLAAEVFAWLKVSGGVDSVELINIEKAMRLYQCIDELDFYKSGVAVENRSRMNVTFQLVNAELDNQFLEEAKQAGLVALKGHRSVGGMRASIYNAMPIEGVIELVKFMQTFAKKHS.

Arg-42 is an L-glutamate binding site. Residues 76-77, Trp-102, Thr-156, Asp-175, and Gln-198 each bind pyridoxal 5'-phosphate; that span reads GR. Position 199 is an N6-(pyridoxal phosphate)lysine (Lys-199). Pyridoxal 5'-phosphate is bound at residue 240 to 241; it reads NT.

Belongs to the class-V pyridoxal-phosphate-dependent aminotransferase family. SerC subfamily. As to quaternary structure, homodimer. Pyridoxal 5'-phosphate serves as cofactor.

Its subcellular location is the cytoplasm. The catalysed reaction is O-phospho-L-serine + 2-oxoglutarate = 3-phosphooxypyruvate + L-glutamate. It carries out the reaction 4-(phosphooxy)-L-threonine + 2-oxoglutarate = (R)-3-hydroxy-2-oxo-4-phosphooxybutanoate + L-glutamate. It participates in amino-acid biosynthesis; L-serine biosynthesis; L-serine from 3-phospho-D-glycerate: step 2/3. The protein operates within cofactor biosynthesis; pyridoxine 5'-phosphate biosynthesis; pyridoxine 5'-phosphate from D-erythrose 4-phosphate: step 3/5. Its function is as follows. Catalyzes the reversible conversion of 3-phosphohydroxypyruvate to phosphoserine and of 3-hydroxy-2-oxo-4-phosphonooxybutanoate to phosphohydroxythreonine. This chain is Phosphoserine aminotransferase, found in Shewanella piezotolerans (strain WP3 / JCM 13877).